A 904-amino-acid chain; its full sequence is Pentatricopeptide repeat-containing protein At4g30825, chloroplastic (904 aa).

Residues 1–61 (MGSLRFSIPL…SSTRVLDKIR (61 aa)) constitute a chloroplast transit peptide. A disordered region spans residues 75–94 (NSASAAPVERSRSSKLSGDQ). PPR repeat units follow at residues 173–203 (NFVA…LCGF), 209–243 (SYQV…GVRP), 244–274 (NVAT…MRKF), 278–312 (CESA…RVRL), 313–347 (KLEN…GFSP), 348–382 (NIIA…GLEP), 383–417 (DETS…GYKP), 418–452 (NSFN…GCQY), 487–521 (NQTS…DSAF), 522–553 (ESHL…MESD), 557–591 (NLHI…GVVL), 592–622 (DRIG…MDEQ), 628–662 (DVYL…GIHW), 663–697 (NQEM…GFTP), 698–732 (NTVT…GVVD), 733–766 (VISY…GFSV), 767–801 (SLEA…TSGP), 802–836 (DHYT…GLGP), 837–871 (DLCS…NIIP), and 872–904 (DKVT…QMGI).

This sequence belongs to the PPR family. P subfamily.

The protein resides in the plastid. The protein localises to the chloroplast. This chain is Pentatricopeptide repeat-containing protein At4g30825, chloroplastic, found in Arabidopsis thaliana (Mouse-ear cress).